The chain runs to 362 residues: Phospho-N-acetylmuramoyl-pentapeptide-transferase (362 aa).

Helical transmembrane passes span 28 to 48 (IISF…VITW), 72 to 92 (TPTM…MVCA), 94 to 114 (LSNI…ILGL), 131 to 151 (VLHK…IIFM), 169 to 189 (FMPQ…VGTS), 200 to 220 (GLAI…AWIS), 236 to 256 (FSGE…GFLW), 264 to 284 (IFMG…IAVL), 290 to 310 (LLLI…LQVI), and 339 to 359 (IIVR…ITLK).

The protein belongs to the glycosyltransferase 4 family. MraY subfamily. Requires Mg(2+) as cofactor.

Its subcellular location is the cell inner membrane. It carries out the reaction UDP-N-acetyl-alpha-D-muramoyl-L-alanyl-gamma-D-glutamyl-meso-2,6-diaminopimeloyl-D-alanyl-D-alanine + di-trans,octa-cis-undecaprenyl phosphate = di-trans,octa-cis-undecaprenyl diphospho-N-acetyl-alpha-D-muramoyl-L-alanyl-D-glutamyl-meso-2,6-diaminopimeloyl-D-alanyl-D-alanine + UMP. It functions in the pathway cell wall biogenesis; peptidoglycan biosynthesis. Catalyzes the initial step of the lipid cycle reactions in the biosynthesis of the cell wall peptidoglycan: transfers peptidoglycan precursor phospho-MurNAc-pentapeptide from UDP-MurNAc-pentapeptide onto the lipid carrier undecaprenyl phosphate, yielding undecaprenyl-pyrophosphoryl-MurNAc-pentapeptide, known as lipid I. This chain is Phospho-N-acetylmuramoyl-pentapeptide-transferase, found in Blochmanniella pennsylvanica (strain BPEN).